Here is a 106-residue protein sequence, read N- to C-terminus: Putative membrane protein insertion efficiency factor (106 aa).

The protein belongs to the UPF0161 family.

It is found in the cell inner membrane. Functionally, could be involved in insertion of integral membrane proteins into the membrane. This chain is Putative membrane protein insertion efficiency factor, found in Acinetobacter baylyi (strain ATCC 33305 / BD413 / ADP1).